Consider the following 55-residue polypeptide: Large ribosomal subunit protein bL33 (55 aa).

The protein belongs to the bacterial ribosomal protein bL33 family.

The sequence is that of Large ribosomal subunit protein bL33 from Bifidobacterium longum (strain DJO10A).